The following is a 167-amino-acid chain: 2-C-methyl-D-erythritol 2,4-cyclodiphosphate synthase (167 aa).

Residues aspartate 11 and histidine 13 each contribute to the a divalent metal cation site. 4-CDP-2-C-methyl-D-erythritol 2-phosphate-binding positions include 11 to 13 and 37 to 38; these read DIH and HS. Histidine 45 serves as a coordination point for a divalent metal cation. 4-CDP-2-C-methyl-D-erythritol 2-phosphate-binding positions include 59–61, 64–68, 103–109, and arginine 145; these read DIG, FSDTD, and AQAPKMA.

It belongs to the IspF family. As to quaternary structure, homotrimer. A divalent metal cation serves as cofactor.

It catalyses the reaction 4-CDP-2-C-methyl-D-erythritol 2-phosphate = 2-C-methyl-D-erythritol 2,4-cyclic diphosphate + CMP. The protein operates within isoprenoid biosynthesis; isopentenyl diphosphate biosynthesis via DXP pathway; isopentenyl diphosphate from 1-deoxy-D-xylulose 5-phosphate: step 4/6. In terms of biological role, involved in the biosynthesis of isopentenyl diphosphate (IPP) and dimethylallyl diphosphate (DMAPP), two major building blocks of isoprenoid compounds. Catalyzes the conversion of 4-diphosphocytidyl-2-C-methyl-D-erythritol 2-phosphate (CDP-ME2P) to 2-C-methyl-D-erythritol 2,4-cyclodiphosphate (ME-CPP) with a corresponding release of cytidine 5-monophosphate (CMP). The protein is 2-C-methyl-D-erythritol 2,4-cyclodiphosphate synthase of Nitrosomonas eutropha (strain DSM 101675 / C91 / Nm57).